The primary structure comprises 657 residues: Glycogen debranching enzyme (657 aa).

The Nucleophile role is filled by Asp-336. Glu-371 serves as the catalytic Proton donor. The tract at residues 460–479 (ANGEENRDGTNNNYSNNHGK) is disordered.

This sequence belongs to the glycosyl hydrolase 13 family.

It carries out the reaction Hydrolysis of (1-&gt;6)-alpha-D-glucosidic linkages to branches with degrees of polymerization of three or four glucose residues in limit dextrin.. It participates in glycan degradation; glycogen degradation. Its function is as follows. Removes maltotriose and maltotetraose chains that are attached by 1,6-alpha-linkage to the limit dextrin main chain, generating a debranched limit dextrin. The protein is Glycogen debranching enzyme of Escherichia coli O6:K15:H31 (strain 536 / UPEC).